A 304-amino-acid chain; its full sequence is Probable solute-binding protein AdeT1 (304 aa).

This sequence belongs to the bacterial solute-binding protein 7 family.

Mediates antimicrobial resistance via active efflux. Contributes to resistance to antibiotics such as chloramphenicol, erythromycin and novobiocin. May be part of a tripartite ATP-independent periplasmic (TRAP) transport system. The polypeptide is Probable solute-binding protein AdeT1 (Acinetobacter baumannii).